The sequence spans 271 residues: tRNA pseudouridine synthase A (271 aa).

Residue Asp-52 is the Nucleophile of the active site. Tyr-110 provides a ligand contact to substrate.

Belongs to the tRNA pseudouridine synthase TruA family. Homodimer.

The enzyme catalyses uridine(38/39/40) in tRNA = pseudouridine(38/39/40) in tRNA. Functionally, formation of pseudouridine at positions 38, 39 and 40 in the anticodon stem and loop of transfer RNAs. This Maridesulfovibrio salexigens (strain ATCC 14822 / DSM 2638 / NCIMB 8403 / VKM B-1763) (Desulfovibrio salexigens) protein is tRNA pseudouridine synthase A.